Consider the following 715-residue polypeptide: Methylcrotonoyl-CoA carboxylase subunit alpha, mitochondrial (715 aa).

Residues 1–38 (MAAAALLAAVDRNQLRRVPILLLQPREWPWKHRTVKYG) constitute a mitochondrion transit peptide. Positions 45-490 (ITKVLIANRG…HTDFIPQHHK (446 aa)) constitute a Biotin carboxylation domain. ATP is bound at residue Lys159. One can recognise an ATP-grasp domain in the interval 163–360 (KSIMAAAGVP…LVEWQLRIAA (198 aa)). Residue Lys193 is modified to N6-acetyllysine. ATP is bound by residues Lys201 and 207 to 208 (GG). Residue Lys233 is modified to N6-acetyllysine. ATP-binding residues include His251, His278, and Glu318. The active site involves Arg335. N6-acetyllysine is present on Lys490. Lys577 is modified (N6-acetyllysine; alternate). Lys577 is modified (N6-succinyllysine; alternate). The Biotinyl-binding domain occupies 622-711 (SIEVGIPVPK…NRHAPLVEFE (90 aa)). Position 677 is an N6-biotinyllysine (Lys677).

Probably a dodecamer composed of six biotin-containing alpha subunits (MCCC1) and six beta (MCCC2) subunits. Interacts (via the biotin carboxylation domain) with SIRT4. It depends on biotin as a cofactor. Post-translationally, acetylated.

It is found in the mitochondrion matrix. It catalyses the reaction 3-methylbut-2-enoyl-CoA + hydrogencarbonate + ATP = 3-methyl-(2E)-glutaconyl-CoA + ADP + phosphate + H(+). The protein operates within amino-acid degradation; L-leucine degradation; (S)-3-hydroxy-3-methylglutaryl-CoA from 3-isovaleryl-CoA: step 2/3. Its function is as follows. Biotin-attachment subunit of the 3-methylcrotonyl-CoA carboxylase, an enzyme that catalyzes the conversion of 3-methylcrotonyl-CoA to 3-methylglutaconyl-CoA, a critical step for leucine and isovaleric acid catabolism. The sequence is that of Methylcrotonoyl-CoA carboxylase subunit alpha, mitochondrial from Rattus norvegicus (Rat).